A 591-amino-acid polypeptide reads, in one-letter code: L-fucose isomerase (591 aa).

Active-site proton acceptor residues include glutamate 337 and aspartate 361. Residues glutamate 337, aspartate 361, and histidine 528 each contribute to the Mn(2+) site.

It belongs to the L-fucose isomerase family. Homohexamer. Mn(2+) is required as a cofactor.

Its subcellular location is the cytoplasm. The catalysed reaction is L-fucose = L-fuculose. It functions in the pathway carbohydrate degradation; L-fucose degradation; L-lactaldehyde and glycerone phosphate from L-fucose: step 1/3. Converts the aldose L-fucose into the corresponding ketose L-fuculose. The sequence is that of L-fucose isomerase from Salmonella typhi.